We begin with the raw amino-acid sequence, 340 residues long: Cell division protein FtsQ (340 aa).

The interval 1-41 is disordered; the sequence is MQGLNPFHRDQGAGGRPAPVRPAPARPAPVAPRTPRKDPAP. Residues 1 to 55 are Cytoplasmic-facing; sequence MQGLNPFHRDQGAGGRPAPVRPAPARPAPVAPRTPRKDPAPSRLAYRLNRMMLRP. Residues 19-32 are compositionally biased toward pro residues; that stretch reads PVRPAPARPAPVAP. A helical transmembrane segment spans residues 56-78; it reads LVRRLVHVGLPAFLAALVAGIWL. Residues 79–340 are Periplasmic-facing; the sequence is SDDTRRANLT…NAAKAKKKSG (262 aa). The 69-residue stretch at 104-172 folds into the POTRA domain; the sequence is FMVKMMTIEG…GVLSAVVTER (69 aa). Positions 308-340 are disordered; it reads RQARGQPELGPDGTPLAPEATAGNAAKAKKKSG. The span at 324 to 333 shows a compositional bias: low complexity; it reads APEATAGNAA.

This sequence belongs to the FtsQ/DivIB family. FtsQ subfamily.

The protein resides in the cell inner membrane. Its function is as follows. Essential cell division protein. This chain is Cell division protein FtsQ, found in Paracoccus denitrificans (strain Pd 1222).